A 665-amino-acid polypeptide reads, in one-letter code: MGRIRVLSDQVANQIAAGEVVDRPASVVKELLENAIDAEATRIRVEVEAGGRKLIRVTDNGIGMMRDDAMLAFERHATSKIRSSDDLLTIATLGFRGEALPSIASISRLEMITRAQGEETGTCIEIAGGKMLRVEDAGAPPGTSFTIRDLFYNTPARRKFLKAESTELSHVSALVTHYALAHPDKHFELHSATHALLNAPPVNEPSERVFQIFGAETLNQLIPMAAERPFDRAGLPEPPPWRRDQDYEPPDPGFLRVKGFISKPALQKLNRNSIYIFINRRLVRDRLILHAITEGYRNIIPPTSFPVALLFLEMPPHEVDVNVHPAKTEVRFRQSSVLHDFLRDSIRNALMKARPAADFLAALSASEPVSSVLPTATPVQDSEVIPAGSEAAGEVAAFALTEPVLPSVEQPLPFARAEMTVPQVQGAAGSAPAPPAYPAVAGAAARVPGGNCGHDAGPEEIPPPGGEAGTLASLASLKPLGQLRESFILAVNDEGFWIIDQHVAHERVLFEKILREREVERVHRQRLLMPLLLDLLPHQMVRFAEIAQELERNGFEAEPFGPHTIAIKASPVGLEGARLERMLVEVLEQTGTGTQSENLETVRTRIAASIACHSAIKINTPLDPQRMEWLLAELARTAHPTSCPHGRPIALRYSWKDIQRAFERI.

This sequence belongs to the DNA mismatch repair MutL/HexB family.

This protein is involved in the repair of mismatches in DNA. It is required for dam-dependent methyl-directed DNA mismatch repair. May act as a 'molecular matchmaker', a protein that promotes the formation of a stable complex between two or more DNA-binding proteins in an ATP-dependent manner without itself being part of a final effector complex. In Acidobacterium capsulatum (strain ATCC 51196 / DSM 11244 / BCRC 80197 / JCM 7670 / NBRC 15755 / NCIMB 13165 / 161), this protein is DNA mismatch repair protein MutL.